Here is a 159-residue protein sequence, read N- to C-terminus: Phosphopantetheine adenylyltransferase (159 aa).

T10 serves as a coordination point for substrate. ATP contacts are provided by residues 10–11 and H18; that span reads TF. Residues K42, M74, and R88 each coordinate substrate. ATP contacts are provided by residues 89–91, E99, and 124–130; these read GLR and WSFISSS.

This sequence belongs to the bacterial CoaD family. As to quaternary structure, homohexamer. It depends on Mg(2+) as a cofactor.

It is found in the cytoplasm. The enzyme catalyses (R)-4'-phosphopantetheine + ATP + H(+) = 3'-dephospho-CoA + diphosphate. Its pathway is cofactor biosynthesis; coenzyme A biosynthesis; CoA from (R)-pantothenate: step 4/5. Reversibly transfers an adenylyl group from ATP to 4'-phosphopantetheine, yielding dephospho-CoA (dPCoA) and pyrophosphate. The polypeptide is Phosphopantetheine adenylyltransferase (Yersinia pseudotuberculosis serotype O:3 (strain YPIII)).